A 367-amino-acid chain; its full sequence is Glutamate 5-kinase (367 aa).

Lys10 lines the ATP pocket. Substrate is bound by residues Asp137 and Asn149. ATP is bound by residues 169–170 (TD) and 211–217 (TGGMATK). The region spanning 275–353 (AGEITVDDGA…QQISEILGYE (79 aa)) is the PUA domain.

The protein belongs to the glutamate 5-kinase family.

The protein localises to the cytoplasm. The enzyme catalyses L-glutamate + ATP = L-glutamyl 5-phosphate + ADP. It participates in amino-acid biosynthesis; L-proline biosynthesis; L-glutamate 5-semialdehyde from L-glutamate: step 1/2. Catalyzes the transfer of a phosphate group to glutamate to form L-glutamate 5-phosphate. This Yersinia pestis bv. Antiqua (strain Antiqua) protein is Glutamate 5-kinase.